Consider the following 201-residue polypeptide: Recombination protein RecR (201 aa).

The segment at 60-75 (CTSCGNVDTSDPCTIC) adopts a C4-type zinc-finger fold. Positions 83-178 (TTLVVVEDVS…KVTRLAHGVP (96 aa)) constitute a Toprim domain.

This sequence belongs to the RecR family.

In terms of biological role, may play a role in DNA repair. It seems to be involved in an RecBC-independent recombinational process of DNA repair. It may act with RecF and RecO. This is Recombination protein RecR from Methylobacterium radiotolerans (strain ATCC 27329 / DSM 1819 / JCM 2831 / NBRC 15690 / NCIMB 10815 / 0-1).